We begin with the raw amino-acid sequence, 147 residues long: Hemoglobin subunit gamma-2 (147 aa).

Residues 3-147 (HFTEEDKATI…VASALSSRYH (145 aa)) form the Globin domain. T13 carries the post-translational modification Phosphothreonine. Phosphoserine is present on residues S45, S51, and S53. An N6-acetyllysine modification is found at K60. H64 provides a ligand contact to heme b. K83 carries the N6-acetyllysine modification. H93 is a binding site for heme b. An S-nitrosocysteine modification is found at C94. 3 positions are modified to phosphoserine: S140, S143, and S144.

The protein belongs to the globin family. Heterotetramer of two alpha chains and two gamma chains in fetal hemoglobin (Hb F). As to expression, red blood cells.

Gamma chains make up the fetal hemoglobin F, in combination with alpha chains. This is Hemoglobin subunit gamma-2 (HBG2) from Pongo pygmaeus (Bornean orangutan).